Consider the following 148-residue polypeptide: MVSTATFFFFVYLTLFVVIGFFSSLFIIPLLGISFVFAIGVVSFGFCSNMSFKMAQLIYVRADAFLKKVLDKMALQTQPAQLQEPQEPLSTLRPVSNPTIPSPLRQTARPSKFVTEEDVIFEPVSAQSAIARSLETTANKAGNKFQLS.

Over 1–7 (MVSTATF) the chain is Cytoplasmic. A helical membrane pass occupies residues 8–28 (FFFVYLTLFVVIGFFSSLFII). Proline 29 is a topological domain (lumenal). Residues 30–50 (LLGISFVFAIGVVSFGFCSNM) traverse the membrane as a helical segment. At 51–148 (SFKMAQLIYV…NKAGNKFQLS (98 aa)) the chain is on the cytoplasmic side. Residues 83–110 (QEPQEPLSTLRPVSNPTIPSPLRQTARP) are disordered. The segment covering 93-109 (RPVSNPTIPSPLRQTAR) has biased composition (polar residues). Residue serine 102 is modified to Phosphoserine.

Belongs to the OSW5 family. In terms of assembly, interacts specifically with the seipin complex FLD1-LDB16. Only a fraction appears to associate with the seipin core components, suggesting that it may be an ancillary subunit of the complex. Found to interact with many mitochondrial and peroxisomal proteins.

The protein localises to the endoplasmic reticulum membrane. It localises to the lipid droplet. Its function is as follows. Involved in lipid droplet (LD) organization. Functions primarily upon nutrient depletion, facilitating LD consumption by lipophagy. Required for correct LD distribution during entry into stationary phase, where LDs accumulate at nucleus-vacuole junction (NVJ) contact sites. Involved in membrane interaction in a manner similar to those of SNARE proteins, binding to partners present in mitochondria or peroxisomes. Its partner on the mitochondrion side might be TOM22, a mitochondrial outer membrane protein, linking lipid droplets and mitochondria by protein-protein interaction. Involved in spore wall assembly. This is Lipid droplet organization protein LDO16 from Saccharomyces cerevisiae (strain ATCC 204508 / S288c) (Baker's yeast).